Here is a 654-residue protein sequence, read N- to C-terminus: Tumor necrosis factor alpha-induced protein 2 (654 aa).

2 disordered regions span residues 1–38 and 50–78; these read MSEA…KKSK and GKKK…PPPT. The segment covering 28 to 38 has biased composition (basic residues); sequence KKKKEKKKKSK.

Belongs to the SEC6 family.

Its function is as follows. May play a role as a mediator of inflammation and angiogenesis. This chain is Tumor necrosis factor alpha-induced protein 2 (TNFAIP2), found in Homo sapiens (Human).